We begin with the raw amino-acid sequence, 457 residues long: Siroheme synthase (457 aa).

The tract at residues 1-204 (MDHLPIFCQL…NDQKAITETT (204 aa)) is precorrin-2 dehydrogenase /sirohydrochlorin ferrochelatase. NAD(+)-binding positions include 22-23 (DV) and 43-44 (LA). S128 carries the post-translational modification Phosphoserine. The tract at residues 216 to 457 (GEVVLVGAGP…RDKLNWFSNH (242 aa)) is uroporphyrinogen-III C-methyltransferase. P225 is a binding site for S-adenosyl-L-methionine. Residue D248 is the Proton acceptor of the active site. The active-site Proton donor is K270. S-adenosyl-L-methionine contacts are provided by residues 301 to 303 (GGD), I306, 331 to 332 (TA), M382, and G411.

In the N-terminal section; belongs to the precorrin-2 dehydrogenase / sirohydrochlorin ferrochelatase family. This sequence in the C-terminal section; belongs to the precorrin methyltransferase family.

It carries out the reaction uroporphyrinogen III + 2 S-adenosyl-L-methionine = precorrin-2 + 2 S-adenosyl-L-homocysteine + H(+). It catalyses the reaction precorrin-2 + NAD(+) = sirohydrochlorin + NADH + 2 H(+). The catalysed reaction is siroheme + 2 H(+) = sirohydrochlorin + Fe(2+). It functions in the pathway cofactor biosynthesis; adenosylcobalamin biosynthesis; precorrin-2 from uroporphyrinogen III: step 1/1. Its pathway is cofactor biosynthesis; adenosylcobalamin biosynthesis; sirohydrochlorin from precorrin-2: step 1/1. It participates in porphyrin-containing compound metabolism; siroheme biosynthesis; precorrin-2 from uroporphyrinogen III: step 1/1. The protein operates within porphyrin-containing compound metabolism; siroheme biosynthesis; siroheme from sirohydrochlorin: step 1/1. It functions in the pathway porphyrin-containing compound metabolism; siroheme biosynthesis; sirohydrochlorin from precorrin-2: step 1/1. In terms of biological role, multifunctional enzyme that catalyzes the SAM-dependent methylations of uroporphyrinogen III at position C-2 and C-7 to form precorrin-2 via precorrin-1. Then it catalyzes the NAD-dependent ring dehydrogenation of precorrin-2 to yield sirohydrochlorin. Finally, it catalyzes the ferrochelation of sirohydrochlorin to yield siroheme. The sequence is that of Siroheme synthase from Escherichia coli O7:K1 (strain IAI39 / ExPEC).